The primary structure comprises 142 residues: Large ribosomal subunit protein uL11 (142 aa).

A disordered region spans residues 86 to 105 (LKSGSKEPGKQSAGQISRAK).

This sequence belongs to the universal ribosomal protein uL11 family. As to quaternary structure, part of the ribosomal stalk of the 50S ribosomal subunit. Interacts with L10 and the large rRNA to form the base of the stalk. L10 forms an elongated spine to which L12 dimers bind in a sequential fashion forming a multimeric L10(L12)X complex. Post-translationally, one or more lysine residues are methylated.

Forms part of the ribosomal stalk which helps the ribosome interact with GTP-bound translation factors. This is Large ribosomal subunit protein uL11 from Chelativorans sp. (strain BNC1).